A 484-amino-acid chain; its full sequence is tRNA sulfurtransferase (484 aa).

The region spanning 63–167 is the THUMP domain; that stretch reads ELFAERLAHI…RDKLYMVSQR (105 aa). ATP-binding positions include 185–186, Lys267, Gly289, and Gln298; that span reads LI. Cys346 and Cys458 form a disulfide bridge. The Rhodanese domain occupies 406-484; that stretch reads AAGNEVIIDI…GYNNVKVYRP (79 aa). Cys458 (cysteine persulfide intermediate) is an active-site residue.

It belongs to the ThiI family.

It localises to the cytoplasm. The catalysed reaction is [ThiI sulfur-carrier protein]-S-sulfanyl-L-cysteine + a uridine in tRNA + 2 reduced [2Fe-2S]-[ferredoxin] + ATP + H(+) = [ThiI sulfur-carrier protein]-L-cysteine + a 4-thiouridine in tRNA + 2 oxidized [2Fe-2S]-[ferredoxin] + AMP + diphosphate. It catalyses the reaction [ThiS sulfur-carrier protein]-C-terminal Gly-Gly-AMP + S-sulfanyl-L-cysteinyl-[cysteine desulfurase] + AH2 = [ThiS sulfur-carrier protein]-C-terminal-Gly-aminoethanethioate + L-cysteinyl-[cysteine desulfurase] + A + AMP + 2 H(+). The protein operates within cofactor biosynthesis; thiamine diphosphate biosynthesis. Its function is as follows. Catalyzes the ATP-dependent transfer of a sulfur to tRNA to produce 4-thiouridine in position 8 of tRNAs, which functions as a near-UV photosensor. Also catalyzes the transfer of sulfur to the sulfur carrier protein ThiS, forming ThiS-thiocarboxylate. This is a step in the synthesis of thiazole, in the thiamine biosynthesis pathway. The sulfur is donated as persulfide by IscS. This Shewanella amazonensis (strain ATCC BAA-1098 / SB2B) protein is tRNA sulfurtransferase.